A 2067-amino-acid polypeptide reads, in one-letter code: Nuclear receptor coactivator 6 (2067 aa).

The segment at 1–932 (MVLDDLPNFE…PPRKKKNCHQ (932 aa)) is TBP/GTF2A-binding region. Residues 1–1060 (MVLDDLPNFE…LPVSQNVHPP (1060 aa)) are CREBBP-binding region. Residues 1–1314 (MVLDDLPNFE…QAHKLDSVVV (1314 aa)) form an NCOA1-binding region region. Residue arginine 95 is modified to Asymmetric dimethylarginine. 2 disordered regions span residues 181–253 (AVMT…RQMN) and 293–548 (TRPL…PGNS). Positions 293 to 304 (TRPLQQHQQQPQ) are enriched in low complexity. Composition is skewed to polar residues over residues 338 to 347 (SLGTMTTNQG), 357 to 372 (MQAQ…TVQT), 383 to 405 (GSQQ…QFTA), 421 to 457 (PLQQ…QQQM), 465 to 506 (NPLS…QGPQ), and 526 to 548 (GQAN…PGNS). Residues 777-931 (VNNSPSQVMG…KPPRKKKNCH (155 aa)) are NCOA6IP-binding region. Serine 888 bears the Phosphoserine mark. An LXXLL motif 1 motif is present at residues 891–895 (LVNLL). 5 disordered regions span residues 903–1279 (HFGV…QGLN), 1313–1358 (VVNS…APKL), 1424–1481 (NIPQ…EENK), 1497–1581 (QLLD…IPPV), and 1769–1822 (LNPD…GKGK). The span at 907-916 (NNKQNNTNAN) shows a compositional bias: low complexity. Basic residues predominate over residues 917-929 (KPKKKKPPRKKKN). The segment covering 984–996 (QRPLPQMPPQLMQ) has biased composition (low complexity). Residues 999 to 1024 (APPPQPPQQQPQPQLPQQQQPPPPSQ) are compositionally biased toward pro residues. The span at 1025–1044 (PQSQQQQQQQQMMMMLMMQQ) shows a compositional bias: low complexity. 2 positions are modified to asymmetric dimethylarginine: arginine 1050 and arginine 1061. Over residues 1066-1078 (PDSQRMPVQQSGN) the composition is skewed to polar residues. An Asymmetric dimethylarginine modification is found at arginine 1099. Polar residues predominate over residues 1103-1123 (SVNTPMGSNSRKMVYQENPQN). Residues 1124–1137 (SSSSPLGEMSSLPE) are compositionally biased toward low complexity. Composition is skewed to polar residues over residues 1152-1165 (NMPS…NQLM), 1176-1194 (LSAT…SLPS), and 1205-1217 (APTQ…TPNR). Over residues 1222 to 1235 (PYYPQTPNNRPPST) the composition is skewed to pro residues. Polar residues predominate over residues 1313–1324 (VVNSGKQSNPGT). A compositionally biased stretch (low complexity) spans 1326-1349 (KRASPSNSRRSSPGSSRKTTPSPG). Residues 1424 to 1435 (NIPQDSDCQNAQ) show a composition bias toward polar residues. Positions 1495 to 1499 (LSQLL) match the LXXLL motif 2 motif. A compositionally biased stretch (low complexity) spans 1545 to 1562 (EPSTSLSSPHSSEPCSTL). The tract at residues 1644–2067 (SEGQSAAQSN…AVQSKRRKSK (424 aa)) is EP300/CRSP3-binding region. Polar residues predominate over residues 1775 to 1805 (SPQTNTSADQSTLPPSQPTTVVSSLLTNSPG). Positions 1806–1818 (SSANRRSPVSSSK) are enriched in low complexity. Residues lysine 1822 and lysine 1825 each carry the N6-acetyllysine modification. 2 disordered regions span residues 1840 to 1911 (GSLE…LPGG) and 1957 to 2067 (VGSH…RKSK). Polar residues predominate over residues 1871-1883 (EQCSTELDSKTPT). A compositionally biased stretch (low complexity) spans 1892-1904 (MTSSPMAPSSTST). Over residues 2005 to 2014 (EPKEIVEKSK) the composition is skewed to basic and acidic residues. At serine 2022 the chain carries Phosphoserine.

Monomer and homodimer. Interacts in vitro with the basal transcription factors GTF2A and TBP, suggesting an autonomous transactivation function. Interacts with NCOA1, CRSP3, RBM14, the histone acetyltransferase proteins EP300 and CREBBP, and with methyltransferase proteins NCOA6IP and PRMT2. Interacts with RBM39. Component of the MLL2/3 complex (also named ASCOM complex), at least composed of KMT2D/MLL2 or KMT2C/MLL3, ASH2L, RBBP5, WDR5, NCOA6, DPY30, KDM6A, PAXIP1/PTIP, PAGR1 and alpha- and beta-tubulin. Interacts with ZNF335; may enhance ligand-dependent transcriptional activation by nuclear hormone receptors. Post-translationally, phosphorylated. As to expression, widely expressed. High expression in testis and weak expression in small intestine.

It localises to the nucleus. Functionally, nuclear receptor coactivator that directly binds nuclear receptors and stimulates the transcriptional activities in a hormone-dependent fashion. Coactivates expression in an agonist- and AF2-dependent manner. Involved in the coactivation of different nuclear receptors, such as for steroids (GR and ERs), retinoids (RARs and RXRs), thyroid hormone (TRs), vitamin D3 (VDR) and prostanoids (PPARs). Probably functions as a general coactivator, rather than just a nuclear receptor coactivator. May also be involved in the coactivation of the NF-kappa-B pathway. May coactivate expression via a remodeling of chromatin and its interaction with histone acetyltransferase proteins. Involved in placental, cardiac, hepatic and embryonic development. This is Nuclear receptor coactivator 6 (Ncoa6) from Mus musculus (Mouse).